The chain runs to 242 residues: Ribose-5-phosphate isomerase A (242 aa).

Residues 39-42, 95-98, and 108-111 contribute to the substrate site; these read SGST, DGAD, and KGGG. The Proton acceptor role is filled by E117. K135 provides a ligand contact to substrate.

This sequence belongs to the ribose 5-phosphate isomerase family. In terms of assembly, homodimer.

The catalysed reaction is aldehydo-D-ribose 5-phosphate = D-ribulose 5-phosphate. It participates in carbohydrate degradation; pentose phosphate pathway; D-ribose 5-phosphate from D-ribulose 5-phosphate (non-oxidative stage): step 1/1. Its function is as follows. Catalyzes the reversible conversion of ribose-5-phosphate to ribulose 5-phosphate. The chain is Ribose-5-phosphate isomerase A from Chlamydia trachomatis serovar D (strain ATCC VR-885 / DSM 19411 / UW-3/Cx).